The chain runs to 299 residues: Cancer/testis antigen family 47 member B1 (299 aa).

Positions 1-10 (MSATGDRHPT) are enriched in basic and acidic residues. Disordered stretches follow at residues 1–102 (MSAT…EGNE) and 215–299 (AREP…SKGT). Composition is skewed to low complexity over residues 20–31 (QEGAQAEAAGAG) and 46–60 (VPAAEVVGVAGPVEG). Residues 81–101 (AEEDSDIGPATEEEEEEEEGN) are compositionally biased toward acidic residues. Residues 215–238 (AREPAEEAADEKPPEEAAEEKLTE) are compositionally biased toward basic and acidic residues. Composition is skewed to acidic residues over residues 239 to 251 (EATEEPAAEEPTS) and 268 to 281 (WDEEAQDAAGEEEK). Positions 270–298 (EEAQDAAGEEEKEQEKEKDVENKVKNSKG) form a coiled coil. The segment covering 282–293 (EQEKEKDVENKV) has biased composition (basic and acidic residues).

This sequence belongs to the CT47 family.

The protein is Cancer/testis antigen family 47 member B1 of Homo sapiens (Human).